Reading from the N-terminus, the 244-residue chain is L-xylulose reductase (244 aa).

The residue at position 1 (Met-1) is an N-acetylmethionine. Residue Leu-11 to Arg-39 coordinates NADP(+). Residue Arg-21 is modified to Omega-N-methylarginine. Ser-136 is a binding site for substrate. Tyr-149 (proton acceptor) is an active-site residue. Lys-153 is an active-site residue.

The protein belongs to the short-chain dehydrogenases/reductases (SDR) family. In terms of assembly, homotetramer. As to expression, highly expressed in kidney and liver. Expressed in epididymis. Expressed at intermediate level in lung. Weakly expressed in brain, heart, spleen and testis.

It is found in the membrane. It catalyses the reaction xylitol + NADP(+) = L-xylulose + NADPH + H(+). Catalyzes the NADPH-dependent reduction of several pentoses, tetroses, trioses, alpha-dicarbonyl compounds and L-xylulose. Participates in the uronate cycle of glucose metabolism. May play a role in the water absorption and cellular osmoregulation in the proximal renal tubules by producing xylitol, an osmolyte, thereby preventing osmolytic stress from occurring in the renal tubules. The sequence is that of L-xylulose reductase (DCXR) from Cavia porcellus (Guinea pig).